The sequence spans 456 residues: Putative gluconeogenesis factor (456 aa).

The protein belongs to the gluconeogenesis factor family.

It localises to the cytoplasm. In terms of biological role, required for morphogenesis under gluconeogenic growth conditions. The chain is Putative gluconeogenesis factor from Nostoc sp. (strain PCC 7120 / SAG 25.82 / UTEX 2576).